We begin with the raw amino-acid sequence, 782 residues long: Coiled-coil alpha-helical rod protein 1 (782 aa).

Composition is skewed to basic and acidic residues over residues 62–74 (ERDV…EPGR) and 208–218 (ETRRAGEAKEL). Disordered stretches follow at residues 62 to 82 (ERDV…WGLE) and 182 to 218 (LTQA…AKEL). Coiled-coil stretches lie at residues 82 to 314 (EGSQ…ELTR), 344 to 437 (LMVQ…NAVS), and 498 to 691 (VADV…QQEG).

The protein localises to the cytoplasm. It is found in the nucleus. Its function is as follows. May be a regulator of keratinocyte proliferation or differentiation. The protein is Coiled-coil alpha-helical rod protein 1 (CCHCR1) of Pan paniscus (Pygmy chimpanzee).